A 235-amino-acid polypeptide reads, in one-letter code: RNA pyrophosphohydrolase (235 aa).

Residues G6 to T149 enclose the Nudix hydrolase domain. A Nudix box motif is present at residues G38–G59. Positions A184–T235 are disordered.

This sequence belongs to the Nudix hydrolase family. RppH subfamily. Requires a divalent metal cation as cofactor.

In terms of biological role, accelerates the degradation of transcripts by removing pyrophosphate from the 5'-end of triphosphorylated RNA, leading to a more labile monophosphorylated state that can stimulate subsequent ribonuclease cleavage. In Polaromonas naphthalenivorans (strain CJ2), this protein is RNA pyrophosphohydrolase.